A 169-amino-acid chain; its full sequence is Actin-related protein 2/3 complex subunit 4 (169 aa).

This sequence belongs to the ARPC4 family. As to quaternary structure, component of the Arp2/3 complex composed of arpB/Arp2, arpC/Arp3, arcA/p41-arc, arcB/p34-arc, arcC/p21-arc, arcD/p20-arc and arcE/p16-arc. Interacts with carmil (via the region between the LRR domain and COOH-terminal proline-rich domain); carmil is required for Arp2/3-dependent actin nucleation. Arp2/3 complex, MyoB, MyoC, and the alpha and beta subunits of capping protein all form a larger complex with carmil.

It is found in the cytoplasm. The protein localises to the cytoskeleton. Its subcellular location is the cytosol. The protein resides in the cell cortex. It localises to the cell projection. It is found in the pseudopodium. Its function is as follows. Functions as a component of the Arp2/3 complex which is involved in regulation of actin polymerization and together with an activating nucleation-promoting factor (NPF) mediates the formation of branched actin networks. Seems to contact the pointed end of the daughter actin filament. The Arp2/3 complex is involved in organizing the actin system in cell motility and chemotaxis, in phagocytosis and macropinocytosis, at late steps of endosome processing, and in mitosis. In concert with a group of other proteins, the Arp2/3 complex plays a general role in the rapid activation and adaptation of the actin system to its multiple functions. The polypeptide is Actin-related protein 2/3 complex subunit 4 (arcD) (Dictyostelium discoideum (Social amoeba)).